The sequence spans 127 residues: Cold-regulated protein 1 (127 aa).

The interval Ala-39–Arg-127 is disordered. The segment covering Ser-85–Met-101 has biased composition (basic residues). Residues Pro-102–Pro-121 are compositionally biased toward low complexity.

This Hordeum vulgare (Barley) protein is Cold-regulated protein 1.